We begin with the raw amino-acid sequence, 212 residues long: Phosphoribosylformylglycinamidine synthase subunit PurQ (212 aa).

Residues 2-212 enclose the Glutamine amidotransferase type-1 domain; the sequence is RIAVLKFPGT…WLGLISWLRR (211 aa). The Nucleophile role is filled by Cys-85. Catalysis depends on residues His-183, Glu-185, and His-191.

Part of the FGAM synthase complex composed of 1 PurL, 1 PurQ and 2 PurS subunits.

It localises to the cytoplasm. The catalysed reaction is N(2)-formyl-N(1)-(5-phospho-beta-D-ribosyl)glycinamide + L-glutamine + ATP + H2O = 2-formamido-N(1)-(5-O-phospho-beta-D-ribosyl)acetamidine + L-glutamate + ADP + phosphate + H(+). The enzyme catalyses L-glutamine + H2O = L-glutamate + NH4(+). It participates in purine metabolism; IMP biosynthesis via de novo pathway; 5-amino-1-(5-phospho-D-ribosyl)imidazole from N(2)-formyl-N(1)-(5-phospho-D-ribosyl)glycinamide: step 1/2. Functionally, part of the phosphoribosylformylglycinamidine synthase complex involved in the purines biosynthetic pathway. Catalyzes the ATP-dependent conversion of formylglycinamide ribonucleotide (FGAR) and glutamine to yield formylglycinamidine ribonucleotide (FGAM) and glutamate. The FGAM synthase complex is composed of three subunits. PurQ produces an ammonia molecule by converting glutamine to glutamate. PurL transfers the ammonia molecule to FGAR to form FGAM in an ATP-dependent manner. PurS interacts with PurQ and PurL and is thought to assist in the transfer of the ammonia molecule from PurQ to PurL. The chain is Phosphoribosylformylglycinamidine synthase subunit PurQ from Pyrobaculum aerophilum (strain ATCC 51768 / DSM 7523 / JCM 9630 / CIP 104966 / NBRC 100827 / IM2).